Reading from the N-terminus, the 103-residue chain is Protein translation factor SUI1 homolog (103 aa).

The protein belongs to the SUI1 family.

The protein is Protein translation factor SUI1 homolog of Hyperthermus butylicus (strain DSM 5456 / JCM 9403 / PLM1-5).